We begin with the raw amino-acid sequence, 512 residues long: Cytochrome P450 monooxygenase adrA (512 aa).

Residues phenylalanine 12–alanine 32 form a helical membrane-spanning segment. 3 N-linked (GlcNAc...) asparagine glycosylation sites follow: asparagine 86, asparagine 149, and asparagine 210. Cysteine 453 is a heme binding site.

It belongs to the cytochrome P450 family. Heme is required as a cofactor.

The protein resides in the membrane. Its pathway is secondary metabolite biosynthesis; terpenoid biosynthesis. Functionally, cytochrome P450 monooxygenase; part of the gene cluster that mediates the biosynthesis of andrastins, meroterpenoid compounds that exhibit inhibitory activity against ras farnesyltransferase, suggesting that they could be promising leads for antitumor agents. The first step of the pathway is the synthesis of 3,5-dimethylorsellinic acid (DMOA) by the polyketide synthase adrD via condensation of one acetyl-CoA starter unit with 3 malonyl-CoA units and 2 methylations. DMAO is then converted to farnesyl-DMAO by the prenyltransferase adrG. The methyltransferase adrK catalyzes the methylation of the carboxyl group of farnesyl-DMAO to farnesyl-DMAO methyl ester which is further converted to epoxyfarnesyl-DMAO methyl ester by the FAD-dependent monooxygenase adrH. The terpene cyclase adrI then catalyzes the carbon skeletal rearrangement to generate the andrastin E, the first compound in the pathway having the andrastin scaffold, with the tetracyclic ring system. The post-cyclization tailoring enzymes adrF, adrE, adrJ, and adrA, are involved in the conversion of andrastin E into andrastin A. The short chain dehydrogenase adrF is responsible for the oxidation of the C-3 a hydroxyl group of andrastin E to yield the corresponding ketone, andrastin D. The ketoreductase adrE stereoselectively reduces the carbonyl moiety to reverse the stereochemistry of the C-3 position to yield andrastin F. The acetyltransferase adrJ is the acetyltransferase that attaches the acetyl group to the C-3 hydroxyl group of andrastin F to yield andrastin C. Finally, the cytochrome P450 monooxygenase adrA catalyzes two sequential oxidation reactions of the C-23 methyl group, to generate the corresponding alcohol andrastin B, and aldehyde andrastin A. The chain is Cytochrome P450 monooxygenase adrA from Penicillium rubens (strain ATCC 28089 / DSM 1075 / NRRL 1951 / Wisconsin 54-1255) (Penicillium chrysogenum).